A 305-amino-acid chain; its full sequence is Probable lipid kinase YegS-like (305 aa).

Residues His2–Tyr134 form the DAGKc domain. Residues Thr40, Gly66–Glu72, and Thr95 each bind ATP. Leu215, Asp218, and Leu220 together coordinate Mg(2+). Glu271 serves as the catalytic Proton acceptor.

Belongs to the diacylglycerol/lipid kinase family. YegS lipid kinase subfamily. Mg(2+) is required as a cofactor. It depends on Ca(2+) as a cofactor.

It is found in the cytoplasm. In terms of biological role, probably phosphorylates lipids; the in vivo substrate is unknown. The sequence is that of Probable lipid kinase YegS-like from Serratia proteamaculans (strain 568).